A 419-amino-acid chain; its full sequence is Elongation factor Tu, chloroplastic (419 aa).

The tr-type G domain occupies 10-214 (KPHVNIGTIG…TVDEHIPTPK (205 aa)). The interval 19–26 (GHVDHGKT) is G1. 19–26 (GHVDHGKT) lines the GTP pocket. Position 26 (threonine 26) interacts with Mg(2+). Positions 60–64 (GITIN) are G2. Residues 81 to 84 (DCPG) are G3. Residues 81-85 (DCPGH) and 136-139 (NKAD) contribute to the GTP site. The segment at 136-139 (NKAD) is G4. The segment at 174-176 (SAL) is G5.

The protein belongs to the TRAFAC class translation factor GTPase superfamily. Classic translation factor GTPase family. EF-Tu/EF-1A subfamily.

The protein resides in the plastid. It is found in the chloroplast. It carries out the reaction GTP + H2O = GDP + phosphate + H(+). Functionally, GTP hydrolase that promotes the GTP-dependent binding of aminoacyl-tRNA to the A-site of ribosomes during protein biosynthesis. The protein is Elongation factor Tu, chloroplastic (tufA) of Stigeoclonium helveticum (Green alga).